Reading from the N-terminus, the 746-residue chain is SNF-related serine/threonine-protein kinase (746 aa).

The region spanning 16–269 is the Protein kinase domain; that stretch reads YDLDKTLGRG…LEEIESHPWL (254 aa). ATP-binding positions include 22 to 30 and Lys45; that span reads LGRGHFAVV. Residue Asp139 is the Proton acceptor of the active site. Ser162 is modified (phosphoserine). Thr173 carries the post-translational modification Phosphothreonine; by LKB1. The UBA domain maps to 291–334; that stretch reads SEEEHNSIIQRMVLGDIADRDAIVEALETNRYNHITATYFLLAE. Phosphoserine occurs at positions 362, 390, 482, 495, and 518. Residues 383-414 form a disordered region; the sequence is SHATVPQSPARAGDSVLNGHRSKGLCDPAKKD. Residues 494–503 are compositionally biased toward acidic residues; the sequence is ESDDEFDMDE. The disordered stretch occupies residues 494 to 638; that stretch reads ESDDEFDMDE…SSSSSPASAA (145 aa). Positions 522–532 are enriched in basic residues; that stretch reads VHKRYHRRKSQ. A compositionally biased stretch (low complexity) spans 533 to 542; the sequence is GRGSSCSSSE. Arg534 is modified (omega-N-methylarginine). A compositionally biased stretch (basic and acidic residues) spans 549–558; it reads ESRRRLDKDS. 2 stretches are compositionally biased toward gly residues: residues 575–592 and 600–614; these read GSEGDGGGQSKPSGGGGV and QGTGGSGQGGSGGTP. Over residues 615–638 the composition is skewed to low complexity; that stretch reads SGTAGSSRRCAGPDSSSSSPASAA.

The protein belongs to the protein kinase superfamily. CAMK Ser/Thr protein kinase family. It depends on Mg(2+) as a cofactor. Autophosphorylated. Phosphorylation on Thr-173 by STK11/LKB1 in complex with STE20-related adapter-alpha (STRADA) pseudo kinase and CAB39. As to expression, ubiquitously expressed in all tissues examined with highest levels in the brain and testis. Strongly expressed in the pyramidal and granule neurons of the hippocampus and also in the cerebellum.

It is found in the nucleus. It carries out the reaction L-seryl-[protein] + ATP = O-phospho-L-seryl-[protein] + ADP + H(+). The catalysed reaction is L-threonyl-[protein] + ATP = O-phospho-L-threonyl-[protein] + ADP + H(+). Activated by phosphorylation on Thr-173. Its function is as follows. May play a role in hematopoietic cell proliferation or differentiation. Potential mediator of neuronal apoptosis. The sequence is that of SNF-related serine/threonine-protein kinase from Rattus norvegicus (Rat).